The sequence spans 1400 residues: DNA topoisomerase 2 (1400 aa).

The span at methionine 1–lysine 30 shows a compositional bias: low complexity. The segment at methionine 1–aspartate 57 is disordered. The span at aspartate 39–aspartate 57 shows a compositional bias: polar residues. Residues asparagine 117, asparagine 146, serine 174 to asparagine 176, and glycine 187 to lysine 194 contribute to the ATP site. Residues threonine 379 to lysine 386 form an interaction with DNA region. Residue glutamine 415–lysine 417 participates in ATP binding. In terms of domain architecture, Toprim spans cysteine 497 to leucine 613. Positions 503, 582, and 584 each coordinate Mg(2+). Residues isoleucine 749–leucine 1214 enclose the Topo IIA-type catalytic domain. Tyrosine 839 serves as the catalytic O-(5'-phospho-DNA)-tyrosine intermediate. The tract at residues lysine 1019 to asparagine 1028 is interaction with DNA. The interval phenylalanine 1235–glutamate 1400 is disordered. The segment covering serine 1262–threonine 1271 has biased composition (low complexity). Residues proline 1312–proline 1321 show a composition bias toward basic residues. Residues aspartate 1389 to glutamate 1400 are compositionally biased toward acidic residues.

This sequence belongs to the type II topoisomerase family. In terms of assembly, homodimer. The cofactor is Mg(2+). Mn(2+) is required as a cofactor. Ca(2+) serves as cofactor.

It is found in the nucleus. The enzyme catalyses ATP-dependent breakage, passage and rejoining of double-stranded DNA.. In terms of biological role, control of topological states of DNA by transient breakage and subsequent rejoining of DNA strands. Topoisomerase II makes double-strand breaks. In Meyerozyma guilliermondii (strain ATCC 6260 / CBS 566 / DSM 6381 / JCM 1539 / NBRC 10279 / NRRL Y-324) (Yeast), this protein is DNA topoisomerase 2 (TOP2).